Reading from the N-terminus, the 983-residue chain is Ephrin type-A receptor 3 (983 aa).

A signal peptide spans Met1–Gly20. At Glu21–Gln541 the chain is on the extracellular side. Residues Glu29–Lys207 form the Eph LBD domain. N-linked (GlcNAc...) asparagine glycosylation is found at Asn232, Asn337, Asn391, Asn404, and Asn493. Fibronectin type-III domains follow at residues Pro325–Ala435 and Ala436–Asp531. Residues Val542–Gly565 form a helical membrane-spanning segment. At Arg566–Val983 the chain is on the cytoplasmic side. 2 positions are modified to phosphotyrosine; by autocatalysis: Tyr596 and Tyr602. Residues Ile621–Ile882 form the Protein kinase domain. ATP-binding positions include Gly628–Gly633, Lys653, and Glu700–Ser706. At Tyr701 the chain carries Phosphotyrosine; by autocatalysis. Catalysis depends on Asp746, which acts as the Proton acceptor. Arg750–Asn751 is a binding site for ATP. Phosphotyrosine; by autocatalysis is present on Tyr779. The SAM domain occupies Thr911–Gln975. Tyr937 carries the post-translational modification Phosphotyrosine. The PDZ-binding signature appears at Val981–Val983.

This sequence belongs to the protein kinase superfamily. Tyr protein kinase family. Ephrin receptor subfamily. In terms of assembly, heterotetramer upon binding of the ligand. The heterotetramer is composed of an ephrin dimer and a receptor dimer. Oligomerization is probably required to induce biological responses. Forms a ternary EFNA5-EPHA3-ADAM10 complex mediating EFNA5 extracellular domain shedding by ADAM10 which regulates the EFNA5-EPHA3 complex internalization and function. Interacts with NCK1 (via SH2 domain); mediates EFNA5-EPHA3 signaling. Interacts (phosphorylated) with PTPN1; dephosphorylates EPHA3 and may regulate its trafficking and function. Interacts (phosphorylated) with CRK; mediates EFNA5-EPHA3 signaling through RHOA GTPase activation. Autophosphorylates upon activation by EFNA5. Phosphorylation on Tyr-602 mediates interaction with NCK1. Dephosphorylated by PTPN1. Widely expressed. Highest level in placenta.

Its subcellular location is the cell membrane. It is found in the secreted. It carries out the reaction L-tyrosyl-[protein] + ATP = O-phospho-L-tyrosyl-[protein] + ADP + H(+). Its function is as follows. Receptor tyrosine kinase which binds promiscuously membrane-bound ephrin family ligands residing on adjacent cells, leading to contact-dependent bidirectional signaling into neighboring cells. The signaling pathway downstream of the receptor is referred to as forward signaling while the signaling pathway downstream of the ephrin ligand is referred to as reverse signaling. Highly promiscuous for ephrin-A ligands it binds preferentially EFNA5. Upon activation by EFNA5 regulates cell-cell adhesion, cytoskeletal organization and cell migration. Plays a role in cardiac cells migration and differentiation and regulates the formation of the atrioventricular canal and septum during development probably through activation by EFNA1. Involved in the retinotectal mapping of neurons. May also control the segregation but not the guidance of motor and sensory axons during neuromuscular circuit development. The polypeptide is Ephrin type-A receptor 3 (EPHA3) (Homo sapiens (Human)).